The primary structure comprises 43 residues: Protein PsbN (43 aa).

The helical transmembrane segment at V7 to Q29 threads the bilayer.

The protein belongs to the PsbN family.

The protein resides in the plastid. The protein localises to the chloroplast thylakoid membrane. Functionally, may play a role in photosystem I and II biogenesis. The chain is Protein PsbN from Ipomoea purpurea (Common morning glory).